A 317-amino-acid polypeptide reads, in one-letter code: L-lactate dehydrogenase (317 aa).

NAD(+) contacts are provided by residues valine 17, aspartate 38, lysine 43, and 82-83 (GA). Substrate contacts are provided by residues glutamine 85, arginine 91, and 123-126 (NPVD). Residues 121-123 (VAN) and serine 146 each bind NAD(+). 151–154 (DSAR) is a substrate binding site. Arginine 156 and histidine 171 together coordinate beta-D-fructose 1,6-bisphosphate. Histidine 178 acts as the Proton acceptor in catalysis. Tyrosine 224 is modified (phosphotyrosine). Residue threonine 233 participates in substrate binding.

The protein belongs to the LDH/MDH superfamily. LDH family. As to quaternary structure, homotetramer.

The protein resides in the cytoplasm. The enzyme catalyses (S)-lactate + NAD(+) = pyruvate + NADH + H(+). The protein operates within fermentation; pyruvate fermentation to lactate; (S)-lactate from pyruvate: step 1/1. With respect to regulation, allosterically activated by fructose 1,6-bisphosphate (FBP). Its function is as follows. Catalyzes the conversion of lactate to pyruvate. The protein is L-lactate dehydrogenase of Moorella thermoacetica (strain ATCC 39073 / JCM 9320).